Consider the following 983-residue polypeptide: UPF0746 protein DDB_G0280809 (983 aa).

Positions 1 to 21 are enriched in basic and acidic residues; sequence MISNKRKEIDTINEHHEKNND. The interval 1–26 is disordered; it reads MISNKRKEIDTINEHHEKNNDDSDGI. In terms of domain architecture, SAP spans 42 to 76; sequence SGSTNYRELQIIAKSLGLASNGKKQLVYNRIEGYF. The disordered stretch occupies residues 391–413; it reads HTTPTSTSTSTSTSTSTYTSTST. Residues 392–413 show a composition bias toward low complexity; sequence TTPTSTSTSTSTSTSTYTSTST.

It belongs to the UPF0746 family.

The chain is UPF0746 protein DDB_G0280809 from Dictyostelium discoideum (Social amoeba).